Here is a 346-residue protein sequence, read N- to C-terminus: Ribulose-5-phosphate reductase (346 aa).

Zn(2+) is bound by residues C45, H71, E72, and E151.

This sequence belongs to the zinc-containing alcohol dehydrogenase family. Zn(2+) serves as cofactor.

It catalyses the reaction D-ribitol 5-phosphate + NADP(+) = D-ribulose 5-phosphate + NADPH + H(+). It participates in cell wall biogenesis; poly(ribitol phosphate) teichoic acid biosynthesis. Functionally, catalyzes the NADPH dependent reduction of D-ribulose 5-phosphate to D-ribitol 5-phosphate. The protein is Ribulose-5-phosphate reductase of Streptococcus pneumoniae (strain ATCC BAA-255 / R6).